A 476-amino-acid polypeptide reads, in one-letter code: Thymidine phosphorylase (476 aa).

The span at 1–11 (MAAPGTPPPLA) shows a compositional bias: pro residues. Residues 1–26 (MAAPGTPPPLAPETAGADSGGGSGEH) form a disordered region. 2 positions are modified to phosphothreonine: T6 and T475.

This sequence belongs to the thymidine/pyrimidine-nucleoside phosphorylase family. Homodimer.

It catalyses the reaction thymidine + phosphate = 2-deoxy-alpha-D-ribose 1-phosphate + thymine. It participates in pyrimidine metabolism; dTMP biosynthesis via salvage pathway; dTMP from thymine: step 1/2. Functionally, catalyzes the reversible phosphorolysis of thymidine. The produced molecules are then utilized as carbon and energy sources or in the rescue of pyrimidine bases for nucleotide synthesis. In Rattus norvegicus (Rat), this protein is Thymidine phosphorylase (Tymp).